Consider the following 213-residue polypeptide: Holliday junction resolvase RecU (213 aa).

Mg(2+)-binding residues include threonine 99, aspartate 101, glutamate 114, and glutamine 133.

The protein belongs to the RecU family. Requires Mg(2+) as cofactor.

Its subcellular location is the cytoplasm. It carries out the reaction Endonucleolytic cleavage at a junction such as a reciprocal single-stranded crossover between two homologous DNA duplexes (Holliday junction).. Functionally, endonuclease that resolves Holliday junction intermediates in genetic recombination. Cleaves mobile four-strand junctions by introducing symmetrical nicks in paired strands. Promotes annealing of linear ssDNA with homologous dsDNA. Required for DNA repair, homologous recombination and chromosome segregation. In Lactococcus lactis subsp. cremoris (strain MG1363), this protein is Holliday junction resolvase RecU.